Here is a 362-residue protein sequence, read N- to C-terminus: Guanine nucleotide-binding protein alpha-10 subunit (362 aa).

The N-myristoyl glycine moiety is linked to residue G2. A lipid anchor (S-palmitoyl cysteine) is attached at C4. The 328-residue stretch at 35-362 folds into the G-alpha domain; that stretch reads LEQSVLLIGP…QENLKDTGMI (328 aa). Residues 38–51 form a G1 motif region; sequence SVLLIGPGESGKST. Residues 43 to 50, 184 to 190, 209 to 213, 278 to 281, and A335 contribute to the GTP site; these read GPGESGKS, VRIRVPT, DCGGQ, and NKID. Mg(2+) contacts are provided by S50 and T190. The interval 182-190 is G2 motif; that stretch reads DIVRIRVPT. Residues 205-214 form a G3 motif region; sequence LSVIDCGGQR. A G4 motif region spans residues 274–281; sequence ILFLNKID. The G5 motif stretch occupies residues 333 to 337; it reads TCAIS.

The protein belongs to the G-alpha family. In terms of assembly, g proteins are composed of 3 units; alpha, beta and gamma. The alpha chain contains the guanine nucleotide binding site.

Functionally, guanine nucleotide-binding proteins (G proteins) are involved as modulators or transducers in various transmembrane signaling systems. In Caenorhabditis briggsae, this protein is Guanine nucleotide-binding protein alpha-10 subunit (gpa-10).